The sequence spans 1411 residues: Early endosome antigen 1 (1411 aa).

Positions 1–27 (MFRRILQRTPGRVGSQGSDLDSSATPI) are disordered. Residues 15–27 (SQGSDLDSSATPI) are compositionally biased toward polar residues. A C2H2-type zinc finger spans residues 41–64 (FICPQCMKSLGSADELFKHYQAVH). Phosphoserine occurs at positions 52 and 70. Positions 78 to 1348 (LALTRDDITL…IKHTQALNRK (1271 aa)) form a coiled coil. Disordered stretches follow at residues 476 to 501 (STELQHQLEKSKQQHQEQQALQQSAT) and 1189 to 1217 (EKESQQLMREQVKKEEEKRKEEFSEKEAK). The span at 481–490 (HQLEKSKQQH) shows a compositional bias: basic and acidic residues. Over residues 491–500 (QEQQALQQSA) the composition is skewed to low complexity. The FYVE-type zinc finger occupies 1352 to 1410 (DNEVQNCMSCGKCFSVTVRRHHCRQCGNIFCAECSTKNALTPSSKKPVRVCDACFNDLQ). The Zn(2+) site is built by C1358, C1361, C1374, C1377, C1382, C1385, C1402, and C1405.

In terms of assembly, homodimer. Binds STX6. Binds RAB5A, RAB5B, RAB5C and RAB22A that have been activated by GTP-binding. Interacts with ERBB2. Interacts with RAB31. Interacts with SAMD9 and SAMD9L. May interact with PLEKHF2.

It localises to the cytoplasm. It is found in the early endosome membrane. Functionally, binds phospholipid vesicles containing phosphatidylinositol 3-phosphate and participates in endosomal trafficking. This is Early endosome antigen 1 (Eea1) from Mus musculus (Mouse).